The chain runs to 923 residues: Mitochondrial 10-formyltetrahydrofolate dehydrogenase (923 aa).

A mitochondrion; not cleaved-targeting transit peptide spans 1-19; the sequence is MLRRGSQALRRFSTGRVYF. Residues 23–331 are hydrolase domain; the sequence is LKLALIGQSL…PASQYFSTGE (309 aa). The residue at position 31 (serine 31) is a Phosphoserine. Position 60 is an N6-succinyllysine (lysine 60). 110 to 112 lines the (6R)-10-formyltetrahydrofolate pocket; that stretch reads QFI. Histidine 128 serves as the catalytic Proton donor. Residue aspartate 164 participates in (6R)-10-formyltetrahydrofolate binding. Positions 339-416 constitute a Carrier domain; that stretch reads AEEVKVAETI…GFIQKVVRKL (78 aa). Serine 375 bears the O-(pantetheine 4'-phosphoryl)serine mark. The aldehyde dehydrogenase domain stretch occupies residues 438 to 923; sequence MVKMPYQCFI…LKTKTVTLEY (486 aa). Residues 592-594 and 618-621 each bind NADP(+); these read IPW and KPAQ. Serine 650 is subject to Phosphoserine. NADP(+)-binding positions include 651-656 and 671-672; these read GGIAGQ and GS. The residue at position 681 (lysine 681) is an N6-succinyllysine. The Proton acceptor role is filled by glutamate 694. 694–695 contacts NADP(+); the sequence is EL. Cysteine 728 acts as the Proton donor in catalysis. Position 778 (lysine 778) interacts with NADP(+). Lysine 788 bears the N6-succinyllysine mark. 825-827 contributes to the NADP(+) binding site; that stretch reads ESF. At lysine 903 the chain carries N6-acetyllysine.

It in the N-terminal section; belongs to the GART family. In the C-terminal section; belongs to the aldehyde dehydrogenase family. ALDH1L subfamily. In terms of processing, phosphopantetheinylation at Ser-375 by AASDHPPT is required for the formyltetrahydrofolate dehydrogenase activity. In terms of tissue distribution, highly expressed in pancreas, heart, brain and skeletal muscle.

It is found in the mitochondrion. It carries out the reaction (6R)-10-formyltetrahydrofolate + NADP(+) + H2O = (6S)-5,6,7,8-tetrahydrofolate + CO2 + NADPH + H(+). Its function is as follows. Mitochondrial 10-formyltetrahydrofolate dehydrogenase that catalyzes the NADP(+)-dependent conversion of 10-formyltetrahydrofolate to tetrahydrofolate and carbon dioxide. The chain is Mitochondrial 10-formyltetrahydrofolate dehydrogenase from Homo sapiens (Human).